The primary structure comprises 283 residues: Protein boule-like (283 aa).

Residues 1 to 25 (MQTDSLSPSPNPVSPVPLNNPTSAP) form a disordered region. The RRM domain occupies 33–110 (NRIFVGGIDF…KKLNIGPAIR (78 aa)). One can recognise a DAZ domain in the interval 160–184 (PSRSVCSSPVMVAQPIYQQPAYHYQ).

It belongs to the RRM DAZ family. In terms of assembly, interacts with DAZ1 and DAZL.

Its subcellular location is the cytoplasm. Functionally, probable RNA-binding protein, which may be required during spermatogenesis. May act by binding to the 3'-UTR of mRNAs and regulating their translation. This Macaca fascicularis (Crab-eating macaque) protein is Protein boule-like (BOLL).